The following is a 226-amino-acid chain: Sugar fermentation stimulation protein homolog (226 aa).

The protein belongs to the SfsA family.

The polypeptide is Sugar fermentation stimulation protein homolog (Clostridium beijerinckii (strain ATCC 51743 / NCIMB 8052) (Clostridium acetobutylicum)).